Reading from the N-terminus, the 166-residue chain is Crossover junction endodeoxyribonuclease RuvC (166 aa).

Residues Asp7, Glu68, and Asp141 contribute to the active site. The Mg(2+) site is built by Asp7, Glu68, and Asp141.

Belongs to the RuvC family. Homodimer which binds Holliday junction (HJ) DNA. The HJ becomes 2-fold symmetrical on binding to RuvC with unstacked arms; it has a different conformation from HJ DNA in complex with RuvA. In the full resolvosome a probable DNA-RuvA(4)-RuvB(12)-RuvC(2) complex forms which resolves the HJ. Mg(2+) serves as cofactor.

It localises to the cytoplasm. It carries out the reaction Endonucleolytic cleavage at a junction such as a reciprocal single-stranded crossover between two homologous DNA duplexes (Holliday junction).. Functionally, the RuvA-RuvB-RuvC complex processes Holliday junction (HJ) DNA during genetic recombination and DNA repair. Endonuclease that resolves HJ intermediates. Cleaves cruciform DNA by making single-stranded nicks across the HJ at symmetrical positions within the homologous arms, yielding a 5'-phosphate and a 3'-hydroxyl group; requires a central core of homology in the junction. The consensus cleavage sequence is 5'-(A/T)TT(C/G)-3'. Cleavage occurs on the 3'-side of the TT dinucleotide at the point of strand exchange. HJ branch migration catalyzed by RuvA-RuvB allows RuvC to scan DNA until it finds its consensus sequence, where it cleaves and resolves the cruciform DNA. The protein is Crossover junction endodeoxyribonuclease RuvC of Caldicellulosiruptor saccharolyticus (strain ATCC 43494 / DSM 8903 / Tp8T 6331).